We begin with the raw amino-acid sequence, 201 residues long: Cytochrome c oxidase assembly protein CtaG (201 aa).

Topologically, residues 1-13 (MTDQGENEKKQRR) are cytoplasmic. The helical; Signal-anchor for type II membrane protein transmembrane segment at 14 to 36 (SNATIAVACLSFFVCMIGAAYAS) threads the bilayer. Residues 37–201 (VPLYRIFCQV…KAVGSTRNGG (165 aa)) are Periplasmic-facing.

This sequence belongs to the COX11/CtaG family.

It localises to the cell inner membrane. Functionally, exerts its effect at some terminal stage of cytochrome c oxidase synthesis, probably by being involved in the insertion of the copper B into subunit I. This is Cytochrome c oxidase assembly protein CtaG from Brucella suis (strain ATCC 23445 / NCTC 10510).